The chain runs to 257 residues: Uroplakin-1a (257 aa).

At 1 to 13 (MASAATEGEKGSP) the chain is on the cytoplasmic side. Residues 14–34 (VVVGLLVVGNIIILLSGLALF) traverse the membrane as a helical segment. Over 35–58 (AETVWVTADQYRVYPLMGVSGKDD) the chain is Extracellular. A helical transmembrane segment spans residues 59 to 85 (VFAGAWIAIFCGFSFFVVASFGVGAAL). Residues 86–90 (CRRRY) lie on the Cytoplasmic side of the membrane. The helical transmembrane segment at 91–111 (MILTYLLLMLIVYIFECASCI) threads the bilayer. The Extracellular segment spans residues 112 to 229 (TSYTHRDYMV…HIGHAIDSYT (118 aa)). A glycan (N-linked (GlcNAc...) asparagine) is linked at Asn169. Residues 230–251 (WGISWFGFAILMWTLPVMLIAM) form a helical membrane-spanning segment. At 252–257 (YFYTTL) the chain is on the cytoplasmic side.

This sequence belongs to the tetraspanin (TM4SF) family. As to quaternary structure, homodimer; disulfide-linked. Interacts with uroplakin-2 (UPK2). Binds to uropathogenic E.coli fimH.

It localises to the membrane. Component of the asymmetric unit membrane (AUM); a highly specialized biomembrane elaborated by terminally differentiated urothelial cells. May play an important role in normal bladder epithelial physiology, possibly in regulating membrane permeability of superficial umbrella cells or in stabilizing the apical membrane through AUM/cytoskeletal interactions. The sequence is that of Uroplakin-1a (Upk1a) from Mus musculus (Mouse).